The sequence spans 211 residues: Ribosomal RNA small subunit methyltransferase G (211 aa).

Residues G81, L86, 132 to 133 (AE), and R147 contribute to the S-adenosyl-L-methionine site.

It belongs to the methyltransferase superfamily. RNA methyltransferase RsmG family.

It is found in the cytoplasm. The enzyme catalyses guanosine(527) in 16S rRNA + S-adenosyl-L-methionine = N(7)-methylguanosine(527) in 16S rRNA + S-adenosyl-L-homocysteine. Functionally, specifically methylates the N7 position of guanine in position 527 of 16S rRNA. The sequence is that of Ribosomal RNA small subunit methyltransferase G from Dichelobacter nodosus (strain VCS1703A).